We begin with the raw amino-acid sequence, 107 residues long: Death-associated protein-like 1 (107 aa).

The tract at residues 1–23 (MANEVQDLLSPRKGGHPPAVKAG) is disordered.

In terms of tissue distribution, expressed in hair follicle (at protein level).

May play a role in the early stages of epithelial differentiation or in apoptosis. The protein is Death-associated protein-like 1 (DAPL1) of Homo sapiens (Human).